A 564-amino-acid chain; its full sequence is MSNSAFNRRWAELLLEALTRHGLRHVCIAPGSRSTPLTIAAAANNKLICHTHFDERGLGHLALGLSKASREPVAVIVTSGTAVANLYPSLIEASLTGERMVFLTADRPPELMDCGANQAIRQNGIFASHPCQTISLPRPTVDIPASWLASVIDHSMANLQHGAVHINCPFAEPLYGNEEPAYDEWQQQLGDWWKSKTPWLSQPVAKVVAEVPDWDCWQQKKGVVLAGRMSAEEGVNVAKWAKALSWPLIGNALSQTGQPLPCADLWLDNPHVQEILAQAQLVVQFGSSLIGKCLLQWQAKCQPQEFWIIDPIPGRLDPANHRGKKLTCHIADWLLAHPAQPCIPWAQSCTLWAEELIVWSEKAVNCVRTELAGKFGEATVAYRLRELLPERGQLFVGNSLIIRLIDTLGQLPAGYPVYSNRGASGIDGLISTAAGVQRATAKPTLAVIGDLSALYDLNSLALLRHPSAPMVLIVVNNNGGQIFSLLPTQEEARQRFYCMPQYVNFDHAAAMFGLKYASPQNWMELQQSIKQAWQQNETTLIELKVPDREGAECLQQLLKQVAML.

Belongs to the TPP enzyme family. MenD subfamily. Homodimer. Requires Mg(2+) as cofactor. Mn(2+) is required as a cofactor. The cofactor is thiamine diphosphate.

The enzyme catalyses isochorismate + 2-oxoglutarate + H(+) = 5-enolpyruvoyl-6-hydroxy-2-succinyl-cyclohex-3-ene-1-carboxylate + CO2. It functions in the pathway quinol/quinone metabolism; 1,4-dihydroxy-2-naphthoate biosynthesis; 1,4-dihydroxy-2-naphthoate from chorismate: step 2/7. Its pathway is quinol/quinone metabolism; menaquinone biosynthesis. Catalyzes the thiamine diphosphate-dependent decarboxylation of 2-oxoglutarate and the subsequent addition of the resulting succinic semialdehyde-thiamine pyrophosphate anion to isochorismate to yield 2-succinyl-5-enolpyruvyl-6-hydroxy-3-cyclohexene-1-carboxylate (SEPHCHC). This Photorhabdus laumondii subsp. laumondii (strain DSM 15139 / CIP 105565 / TT01) (Photorhabdus luminescens subsp. laumondii) protein is 2-succinyl-5-enolpyruvyl-6-hydroxy-3-cyclohexene-1-carboxylate synthase.